The following is a 365-amino-acid chain: Mitogen-activated protein kinase 13 (365 aa).

One can recognise a Protein kinase domain in the interval 25-308 (YVSPTHVGSG…AAQALTHPFF (284 aa)). ATP is bound at residue 31–39 (VGSGAYGSV). Phosphoserine is present on S47. K54 contributes to the ATP binding site. The active-site Proton acceptor is D150. At T180 the chain carries Phosphothreonine; by MAP2K3, MAP2K4, MAP2K6 and MAP2K7. The short motif at 180-182 (TGY) is the TXY element. Phosphotyrosine; by MAP2K3, MAP2K4, MAP2K6 and MAP2K7 is present on Y182. The residue at position 350 (S350) is a Phosphoserine.

It belongs to the protein kinase superfamily. CMGC Ser/Thr protein kinase family. MAP kinase subfamily. Interacts with MAPK8IP2. Mg(2+) is required as a cofactor. Post-translationally, dually phosphorylated on Thr-180 and Tyr-182 by MAP2K3/MKK3, MAP2K4/MKK4, MAP2K6/MKK6 and MAP2K7/MKK7, which activates the enzyme. Dephosphorylated by dual specificity phosphatase DUSP1.

The enzyme catalyses L-seryl-[protein] + ATP = O-phospho-L-seryl-[protein] + ADP + H(+). It catalyses the reaction L-threonyl-[protein] + ATP = O-phospho-L-threonyl-[protein] + ADP + H(+). With respect to regulation, activated by phosphorylation on threonine and tyrosine by dual specificity kinases, MAP2K3/MKK3, MAP2K6/MKK6, MAP2K4/MKK4 and MAP2K7/MKK7. Activation by ultraviolet radiation, hyperosmotic shock, anisomycin or by TNF-alpha is mediated by MAP2K3/MKK3. Inhibited by dual specificity phosphatase DUSP1. Functionally, serine/threonine kinase which acts as an essential component of the MAP kinase signal transduction pathway. MAPK13 is one of the four p38 MAPKs which play an important role in the cascades of cellular responses evoked by extracellular stimuli such as pro-inflammatory cytokines or physical stress leading to direct activation of transcription factors such as ELK1 and ATF2. Accordingly, p38 MAPKs phosphorylate a broad range of proteins and it has been estimated that they may have approximately 200 to 300 substrates each. MAPK13 is one of the less studied p38 MAPK isoforms. Some of the targets are downstream kinases such as MAPKAPK2, which are activated through phosphorylation and further phosphorylate additional targets. Plays a role in the regulation of protein translation by phosphorylating and inactivating EEF2K. Involved in cytoskeletal remodeling through phosphorylation of MAPT and STMN1. Mediates UV irradiation induced up-regulation of the gene expression of CXCL14. Plays an important role in the regulation of epidermal keratinocyte differentiation, apoptosis and skin tumor development. Phosphorylates the transcriptional activator MYB in response to stress which leads to rapid MYB degradation via a proteasome-dependent pathway. MAPK13 also phosphorylates and down-regulates PRKD1 during regulation of insulin secretion in pancreatic beta cells. This Pan troglodytes (Chimpanzee) protein is Mitogen-activated protein kinase 13 (MAPK13).